Here is a 196-residue protein sequence, read N- to C-terminus: Thymidine kinase (196 aa).

ATP-binding positions include 9–16 (SAMNAGKS) and 87–90 (DECQ). Residue E88 is the Proton acceptor of the active site. C145, C147, C182, and H185 together coordinate Zn(2+).

The protein belongs to the thymidine kinase family. Homotetramer.

The protein localises to the cytoplasm. The catalysed reaction is thymidine + ATP = dTMP + ADP + H(+). The polypeptide is Thymidine kinase (Yersinia pestis).